A 23-amino-acid polypeptide reads, in one-letter code: Dermaseptin-4 (23 aa).

At Q23 the chain carries Glutamine amide.

In terms of tissue distribution, expressed by the skin glands.

Its subcellular location is the secreted. In terms of biological role, antimicrobial peptide, active against the Gram-positive bacterium S.aureus, and the Gram-negative bacteria E.coli and P.aeruginosa. Has hemolytic activity (5% hemolysis at 128 ug/ml). This chain is Dermaseptin-4, found in Phyllomedusa tarsius (Brownbelly leaf frog).